Reading from the N-terminus, the 412-residue chain is Serine hydroxymethyltransferase (412 aa).

Residues Leu-117 and 121–123 (GHL) each bind (6S)-5,6,7,8-tetrahydrofolate. Lys-226 bears the N6-(pyridoxal phosphate)lysine mark.

This sequence belongs to the SHMT family. In terms of assembly, homodimer. It depends on pyridoxal 5'-phosphate as a cofactor.

It localises to the cytoplasm. The enzyme catalyses (6R)-5,10-methylene-5,6,7,8-tetrahydrofolate + glycine + H2O = (6S)-5,6,7,8-tetrahydrofolate + L-serine. It participates in one-carbon metabolism; tetrahydrofolate interconversion. It functions in the pathway amino-acid biosynthesis; glycine biosynthesis; glycine from L-serine: step 1/1. In terms of biological role, catalyzes the reversible interconversion of serine and glycine with tetrahydrofolate (THF) serving as the one-carbon carrier. This reaction serves as the major source of one-carbon groups required for the biosynthesis of purines, thymidylate, methionine, and other important biomolecules. Also exhibits THF-independent aldolase activity toward beta-hydroxyamino acids, producing glycine and aldehydes, via a retro-aldol mechanism. This Symbiobacterium thermophilum (strain DSM 24528 / JCM 14929 / IAM 14863 / T) protein is Serine hydroxymethyltransferase.